The following is a 464-amino-acid chain: ATP synthase subunit beta (464 aa).

153 to 160 lines the ATP pocket; it reads GGAGVGKT.

It belongs to the ATPase alpha/beta chains family. As to quaternary structure, F-type ATPases have 2 components, CF(1) - the catalytic core - and CF(0) - the membrane proton channel. CF(1) has five subunits: alpha(3), beta(3), gamma(1), delta(1), epsilon(1). CF(0) has three main subunits: a(1), b(2) and c(9-12). The alpha and beta chains form an alternating ring which encloses part of the gamma chain. CF(1) is attached to CF(0) by a central stalk formed by the gamma and epsilon chains, while a peripheral stalk is formed by the delta and b chains.

Its subcellular location is the cell inner membrane. The enzyme catalyses ATP + H2O + 4 H(+)(in) = ADP + phosphate + 5 H(+)(out). Its function is as follows. Produces ATP from ADP in the presence of a proton gradient across the membrane. The catalytic sites are hosted primarily by the beta subunits. This chain is ATP synthase subunit beta, found in Burkholderia ambifaria (strain MC40-6).